Reading from the N-terminus, the 245-residue chain is 1-(5-phosphoribosyl)-5-[(5-phosphoribosylamino)methylideneamino] imidazole-4-carboxamide isomerase (245 aa).

The active-site Proton acceptor is the Asp7. The Proton donor role is filled by Asp129.

The protein belongs to the HisA/HisF family.

It localises to the cytoplasm. The enzyme catalyses 1-(5-phospho-beta-D-ribosyl)-5-[(5-phospho-beta-D-ribosylamino)methylideneamino]imidazole-4-carboxamide = 5-[(5-phospho-1-deoxy-D-ribulos-1-ylimino)methylamino]-1-(5-phospho-beta-D-ribosyl)imidazole-4-carboxamide. Its pathway is amino-acid biosynthesis; L-histidine biosynthesis; L-histidine from 5-phospho-alpha-D-ribose 1-diphosphate: step 4/9. In Erwinia tasmaniensis (strain DSM 17950 / CFBP 7177 / CIP 109463 / NCPPB 4357 / Et1/99), this protein is 1-(5-phosphoribosyl)-5-[(5-phosphoribosylamino)methylideneamino] imidazole-4-carboxamide isomerase.